The following is a 674-amino-acid chain: Zinc finger protein 750 (674 aa).

A CCHC-type zinc finger spans residues 25 to 51 (YKCFQCPFTCNEKSHLFNHMKYGLCKN). Cys-27, Cys-30, His-43, and Cys-49 together coordinate Zn(2+). Disordered stretches follow at residues 105-125 (EAKENLDLKNEPKSHAEKTTV), 370-466 (LAKN…QSHS), and 594-674 (TSSP…PRVS). 2 stretches are compositionally biased toward polar residues: residues 401 to 411 (SPTNFTQSSQG) and 444 to 466 (DSQTIISRENSPSFGNDGVQSHS).

It is found in the nucleus. Functionally, transcription factor involved in epidermis differentiation. This Xenopus laevis (African clawed frog) protein is Zinc finger protein 750 (znf750).